We begin with the raw amino-acid sequence, 405 residues long: Acetate kinase (405 aa).

Asparagine 10 provides a ligand contact to Mg(2+). ATP is bound at residue lysine 17. Arginine 93 lines the substrate pocket. Aspartate 150 (proton donor/acceptor) is an active-site residue. ATP is bound by residues histidine 210–glycine 214, aspartate 284–arginine 286, and glycine 332–asparagine 336. Glutamate 386 is a Mg(2+) binding site.

Belongs to the acetokinase family. Homodimer. The cofactor is Mg(2+). Mn(2+) serves as cofactor.

Its subcellular location is the cytoplasm. The enzyme catalyses acetate + ATP = acetyl phosphate + ADP. It functions in the pathway metabolic intermediate biosynthesis; acetyl-CoA biosynthesis; acetyl-CoA from acetate: step 1/2. Functionally, catalyzes the formation of acetyl phosphate from acetate and ATP. Can also catalyze the reverse reaction. The sequence is that of Acetate kinase from Streptomyces avermitilis (strain ATCC 31267 / DSM 46492 / JCM 5070 / NBRC 14893 / NCIMB 12804 / NRRL 8165 / MA-4680).